A 308-amino-acid polypeptide reads, in one-letter code: D-alanine--D-alanine ligase (308 aa).

The ATP-grasp domain occupies 104–301 (KQIWQGSDLP…FDELCVAILE (198 aa)). 130–185 (IAELGLPVIIKPVHEGSSVGMSKVEKAEDFAAAIEKATQHDAVVMAEKWITGREFT) is an ATP binding site. Residues D255, E268, and N270 each coordinate Mg(2+).

The protein belongs to the D-alanine--D-alanine ligase family. It depends on Mg(2+) as a cofactor. Mn(2+) is required as a cofactor.

It is found in the cytoplasm. The catalysed reaction is 2 D-alanine + ATP = D-alanyl-D-alanine + ADP + phosphate + H(+). The protein operates within cell wall biogenesis; peptidoglycan biosynthesis. Cell wall formation. This chain is D-alanine--D-alanine ligase, found in Acinetobacter baumannii (strain ACICU).